The following is a 429-amino-acid chain: Adenylosuccinate synthetase (429 aa).

Residues 12–18 (GDEGKGK) and 40–42 (GHT) contribute to the GTP site. The Proton acceptor role is filled by Asp-13. Residues Asp-13 and Gly-40 each coordinate Mg(2+). Residues 13 to 16 (DEGK), 38 to 41 (NAGH), Thr-128, Arg-142, Gln-223, Thr-238, and Arg-302 contribute to the IMP site. The Proton donor role is filled by His-41. Position 298-304 (298-304 (TTTGRAR)) interacts with substrate. GTP-binding positions include Arg-304, 330 to 332 (SID), and 412 to 414 (SVG).

This sequence belongs to the adenylosuccinate synthetase family. In terms of assembly, homodimer. Requires Mg(2+) as cofactor.

The protein resides in the cytoplasm. The enzyme catalyses IMP + L-aspartate + GTP = N(6)-(1,2-dicarboxyethyl)-AMP + GDP + phosphate + 2 H(+). The protein operates within purine metabolism; AMP biosynthesis via de novo pathway; AMP from IMP: step 1/2. Its function is as follows. Plays an important role in the de novo pathway of purine nucleotide biosynthesis. Catalyzes the first committed step in the biosynthesis of AMP from IMP. The chain is Adenylosuccinate synthetase from Oceanobacillus iheyensis (strain DSM 14371 / CIP 107618 / JCM 11309 / KCTC 3954 / HTE831).